The sequence spans 1935 residues: Rho GTPase-activating protein 21 (1935 aa).

The tract at residues 1-46 is disordered; it reads MATRRATVPEQQQQQPSSPGSEISKNKDGQEQSEMVSPTEEEGFCW. Positions 78 to 163 constitute a PDZ domain; that stretch reads HTTVKDEENG…TLELSVMPKD (86 aa). Disordered stretches follow at residues 212–237, 339–373, 413–456, 673–718, and 862–919; these read VEVP…TTQP, PPSY…PGSH, QNTT…QERL, TSTS…DSNS, and NSKT…DVFS. Composition is skewed to polar residues over residues 217–237, 348–373, and 413–429; these read SGTS…TTQP, SMFS…PGSH, and QNTT…SSGQ. Composition is skewed to low complexity over residues 441–451 and 673–685; these read PQSVQMRQRSV and TSTS…PAHT. Residues 708 to 718 show a composition bias toward polar residues; the sequence is SPEANAGDSNS. Residues 863–884 are compositionally biased toward basic and acidic residues; that stretch reads SKTERSKSCDEGLDDYKDEGKL. The 114-residue stretch at 920–1033 folds into the PH domain; sequence DSNKEGFLYF…WIKAIQENGN (114 aa). The interval 1056–1126 is disordered; sequence TMMSSSSNKS…KGSWRRIMKK (71 aa). The segment covering 1059-1072 has biased composition (low complexity); the sequence is SSSSNKSEQSPKPS. Residues 1097-1119 show a composition bias toward basic and acidic residues; sequence PKQESERRLFSKDDISPPKDKGS. Positions 1140–1332 constitute a Rho-GAP domain; that stretch reads VRLDDCPPAH…TLIQQHDWFF (193 aa). Disordered stretches follow at residues 1341-1393, 1411-1431, 1488-1510, 1525-1548, 1637-1665, 1688-1733, and 1838-1925; these read ITAV…GSGK, RKRK…ELDN, SEAT…RLPP, SMSD…KPKV, HRSK…SITP, SIRQ…EPEE, and SELS…SGTQ. The span at 1345 to 1355 shows a compositional bias: polar residues; it reads QEESTVESQPV. Residues 1376-1393 show a composition bias toward low complexity; the sequence is SDSASDSAKSKGSWGSGK. Polar residues-rich tracts occupy residues 1525–1543 and 1646–1662; these read SMSD…SAQR and RNVQ…TEGS. The segment covering 1691 to 1705 has biased composition (basic and acidic residues); sequence QKTDSECSAESKNEE. 2 stretches are compositionally biased toward polar residues: residues 1872–1889 and 1898–1911; these read QVST…SQGT and NGDS…NNFS.

It localises to the golgi apparatus membrane. Its subcellular location is the cell junction. The protein resides in the cytoplasmic vesicle membrane. It is found in the cytoplasm. The protein localises to the cytoskeleton. GTPase-activating protein (GAP) for rhoa and cdc42. This is Rho GTPase-activating protein 21 (arhgap21) from Xenopus tropicalis (Western clawed frog).